Reading from the N-terminus, the 397-residue chain is F-box protein At3g28330 (397 aa).

In terms of domain architecture, F-box spans 6 to 56 (KKDMDFLTEDLWEIILARLPLKSIITTPKLVCKVWKSIIESRCFRDLFQSL).

This Arabidopsis thaliana (Mouse-ear cress) protein is F-box protein At3g28330.